The sequence spans 868 residues: Receptor-like protein kinase At5g59670 (868 aa).

The signal sequence occupies residues 1 to 22; that stretch reads MESSFGLLLALLTLTIIHIVQA. Residues 23–500 are Extracellular-facing; the sequence is QDPQGFISLD…PRLIKPPKKE (478 aa). N-linked (GlcNAc...) asparagine glycosylation is found at asparagine 38, asparagine 94, asparagine 141, asparagine 287, asparagine 300, asparagine 372, asparagine 405, asparagine 416, asparagine 423, asparagine 445, asparagine 464, and asparagine 471. 3 LRR repeats span residues 409 to 432, 433 to 459, and 461 to 481; these read PPRI…AIQS, ITQL…KMKS, and SVIN…LRKK. The chain crosses the membrane as a helical span at residues 501–521; the sequence is FPVAIVTLVVFVTVIVVLFLV. Topologically, residues 522-868 are cytoplasmic; the sequence is FRKKMSTIVK…LDTTAVPMAR (347 aa). Threonine 555 is modified (phosphothreonine). In terms of domain architecture, Protein kinase spans 564–834; it reads KNFQRVLGKG…SMSQVIHELK (271 aa). ATP contacts are provided by residues 570 to 578 and lysine 592; that span reads LGKGGFGMV. Position 637 is a phosphotyrosine (tyrosine 637). The active-site Proton acceptor is the aspartate 689. A Phosphoserine modification is found at serine 723. A phosphothreonine mark is found at threonine 724 and threonine 729.

This sequence belongs to the protein kinase superfamily. Ser/Thr protein kinase family. Post-translationally, autophosphorylated on Tyr and Thr residues.

It is found in the cell membrane. It catalyses the reaction L-seryl-[protein] + ATP = O-phospho-L-seryl-[protein] + ADP + H(+). The enzyme catalyses L-threonyl-[protein] + ATP = O-phospho-L-threonyl-[protein] + ADP + H(+). The catalysed reaction is L-tyrosyl-[protein] + ATP = O-phospho-L-tyrosyl-[protein] + ADP + H(+). Functionally, probable receptor with a dual specificity kinase activity acting on both serine/threonine- and tyrosine-containing substrates. This is Receptor-like protein kinase At5g59670 from Arabidopsis thaliana (Mouse-ear cress).